Here is a 482-residue protein sequence, read N- to C-terminus: tRNA sulfurtransferase (482 aa).

The THUMP domain maps to 61 to 165; it reads PAIRDALTRI…NDRLLLVKGR (105 aa). ATP is bound by residues 183–184, Lys-265, Gly-287, and Gln-296; that span reads LI. A disulfide bond links Cys-344 and Cys-456. One can recognise a Rhodanese domain in the interval 404–482; sequence FGANDAILDI…GFSNVKVYRP (79 aa). Cys-456 serves as the catalytic Cysteine persulfide intermediate.

It belongs to the ThiI family.

Its subcellular location is the cytoplasm. It catalyses the reaction [ThiI sulfur-carrier protein]-S-sulfanyl-L-cysteine + a uridine in tRNA + 2 reduced [2Fe-2S]-[ferredoxin] + ATP + H(+) = [ThiI sulfur-carrier protein]-L-cysteine + a 4-thiouridine in tRNA + 2 oxidized [2Fe-2S]-[ferredoxin] + AMP + diphosphate. It carries out the reaction [ThiS sulfur-carrier protein]-C-terminal Gly-Gly-AMP + S-sulfanyl-L-cysteinyl-[cysteine desulfurase] + AH2 = [ThiS sulfur-carrier protein]-C-terminal-Gly-aminoethanethioate + L-cysteinyl-[cysteine desulfurase] + A + AMP + 2 H(+). The protein operates within cofactor biosynthesis; thiamine diphosphate biosynthesis. Its function is as follows. Catalyzes the ATP-dependent transfer of a sulfur to tRNA to produce 4-thiouridine in position 8 of tRNAs, which functions as a near-UV photosensor. Also catalyzes the transfer of sulfur to the sulfur carrier protein ThiS, forming ThiS-thiocarboxylate. This is a step in the synthesis of thiazole, in the thiamine biosynthesis pathway. The sulfur is donated as persulfide by IscS. In Klebsiella pneumoniae subsp. pneumoniae (strain ATCC 700721 / MGH 78578), this protein is tRNA sulfurtransferase.